The chain runs to 107 residues: Anti-adapter protein IraM (107 aa).

The protein belongs to the IraM/RssC family.

It localises to the cytoplasm. Inhibits RpoS proteolysis by regulating RssB activity, thereby increasing the stability of the sigma stress factor RpoS during magnesium starvation. In Escherichia coli (strain 55989 / EAEC), this protein is Anti-adapter protein IraM.